The sequence spans 355 residues: MKLVDEAEILVTAGNGGNGCVGFRREKFIPLGGPDGGDGGAGGSVWIVADENVNTLVDFRHERTFKAQRGENGMGRQAYGKGGEDRIIVVPVGTVVINVQTDEVIGDLTRHGDRLLVAKGGKGGLGNMHFKSSVNRAPRQATTGEEGEERLLKLELKLLADVGLLGFPNAGKSTLIRAVSSATPKVADYPFTTLYPNLGVVSVEAYRSFVIADVPGLIEGAADGAGLGTQFLRHLQRTRLLLHLVDISPALGVYGEGGVDGVSPADQVRTIERELERHDPELLKKPRWLVLNKADLMFEDEARAAAESIVAELGWTAPWYLVSALGRDGTFPIMKDVMAFFDRQREDELDARNAG.

One can recognise an Obg domain in the interval 1-159 (MKLVDEAEIL…RLLKLELKLL (159 aa)). In terms of domain architecture, OBG-type G spans 160-342 (ADVGLLGFPN…IMKDVMAFFD (183 aa)). GTP contacts are provided by residues 166–173 (GFPNAGKS), 191–195 (FTTLY), 213–216 (DVPG), 292–295 (NKAD), and 323–325 (SAL). Positions 173 and 193 each coordinate Mg(2+).

Belongs to the TRAFAC class OBG-HflX-like GTPase superfamily. OBG GTPase family. In terms of assembly, monomer. Mg(2+) serves as cofactor.

The protein localises to the cytoplasm. An essential GTPase which binds GTP, GDP and possibly (p)ppGpp with moderate affinity, with high nucleotide exchange rates and a fairly low GTP hydrolysis rate. Plays a role in control of the cell cycle, stress response, ribosome biogenesis and in those bacteria that undergo differentiation, in morphogenesis control. The polypeptide is GTPase Obg (Xanthomonas euvesicatoria pv. vesicatoria (strain 85-10) (Xanthomonas campestris pv. vesicatoria)).